The primary structure comprises 350 residues: Transcription factor MYB102 (350 aa).

HTH myb-type domains lie at 9–65 (KNGL…RPDI) and 66–116 (KRGR…RKKL). 2 DNA-binding regions (H-T-H motif) span residues 37–61 (WRTLPKNAGLQRCGKSCRLRWTNYL) and 89–112 (WSAIAARLPGRTDNEIKNFWNTHI).

In terms of tissue distribution, expressed in rosette leaves, cauline leaves and flowers.

It localises to the nucleus. In terms of biological role, probable transcription factor that may function in osmotic stress and wounding signaling pathways. Contributes to basal resistance against the herbivore Pieris rapae (white cabbage butterfly) feeding. The chain is Transcription factor MYB102 from Arabidopsis thaliana (Mouse-ear cress).